The sequence spans 191 residues: dCTP deaminase, dUMP-forming (191 aa).

DCTP contacts are provided by residues 101–106 (KSSLGR), aspartate 119, 127–129 (TLE), glutamine 148, tyrosine 162, and glutamine 174. Glutamate 129 functions as the Proton donor/acceptor in the catalytic mechanism.

It belongs to the dCTP deaminase family. Homotrimer.

It catalyses the reaction dCTP + 2 H2O = dUMP + NH4(+) + diphosphate. The protein operates within pyrimidine metabolism; dUMP biosynthesis; dUMP from dCTP: step 1/1. Its function is as follows. Bifunctional enzyme that catalyzes both the deamination of dCTP to dUTP and the hydrolysis of dUTP to dUMP without releasing the toxic dUTP intermediate. The chain is dCTP deaminase, dUMP-forming from Streptomyces coelicolor (strain ATCC BAA-471 / A3(2) / M145).